The chain runs to 129 residues: Small ribosomal subunit protein uS11 (129 aa).

It belongs to the universal ribosomal protein uS11 family. In terms of assembly, part of the 30S ribosomal subunit. Interacts with proteins S7 and S18. Binds to IF-3.

Its function is as follows. Located on the platform of the 30S subunit, it bridges several disparate RNA helices of the 16S rRNA. Forms part of the Shine-Dalgarno cleft in the 70S ribosome. The sequence is that of Small ribosomal subunit protein uS11 from Hyphomonas neptunium (strain ATCC 15444).